Reading from the N-terminus, the 146-residue chain is Putative pre-16S rRNA nuclease (146 aa).

This sequence belongs to the YqgF nuclease family.

Its subcellular location is the cytoplasm. Could be a nuclease involved in processing of the 5'-end of pre-16S rRNA. This chain is Putative pre-16S rRNA nuclease, found in Burkholderia pseudomallei (strain 668).